We begin with the raw amino-acid sequence, 203 residues long: NADH-quinone oxidoreductase subunit C (203 aa).

It belongs to the complex I 30 kDa subunit family. In terms of assembly, NDH-1 is composed of 14 different subunits. Subunits NuoB, C, D, E, F, and G constitute the peripheral sector of the complex.

Its subcellular location is the cell inner membrane. The catalysed reaction is a quinone + NADH + 5 H(+)(in) = a quinol + NAD(+) + 4 H(+)(out). Functionally, NDH-1 shuttles electrons from NADH, via FMN and iron-sulfur (Fe-S) centers, to quinones in the respiratory chain. The immediate electron acceptor for the enzyme in this species is believed to be ubiquinone. Couples the redox reaction to proton translocation (for every two electrons transferred, four hydrogen ions are translocated across the cytoplasmic membrane), and thus conserves the redox energy in a proton gradient. This is NADH-quinone oxidoreductase subunit C from Verminephrobacter eiseniae (strain EF01-2).